The sequence spans 487 residues: N-succinylglutamate 5-semialdehyde dehydrogenase (487 aa).

NAD(+) is bound at residue 221–226; it reads GSSRTG. Residues Glu-244 and Cys-278 contribute to the active site.

This sequence belongs to the aldehyde dehydrogenase family. AstD subfamily.

It catalyses the reaction N-succinyl-L-glutamate 5-semialdehyde + NAD(+) + H2O = N-succinyl-L-glutamate + NADH + 2 H(+). The protein operates within amino-acid degradation; L-arginine degradation via AST pathway; L-glutamate and succinate from L-arginine: step 4/5. Functionally, catalyzes the NAD-dependent reduction of succinylglutamate semialdehyde into succinylglutamate. The sequence is that of N-succinylglutamate 5-semialdehyde dehydrogenase from Ectopseudomonas mendocina (strain ymp) (Pseudomonas mendocina).